A 441-amino-acid chain; its full sequence is UDP-N-acetylglucosamine 1-carboxyvinyltransferase 1 (441 aa).

42-43 lines the phosphoenolpyruvate pocket; sequence KN. Arginine 117 is a UDP-N-acetyl-alpha-D-glucosamine binding site. Cysteine 141 serves as the catalytic Proton donor. Cysteine 141 carries the 2-(S-cysteinyl)pyruvic acid O-phosphothioketal modification. Residues aspartate 330 and isoleucine 352 each contribute to the UDP-N-acetyl-alpha-D-glucosamine site.

This sequence belongs to the EPSP synthase family. MurA subfamily.

The protein resides in the cytoplasm. It carries out the reaction phosphoenolpyruvate + UDP-N-acetyl-alpha-D-glucosamine = UDP-N-acetyl-3-O-(1-carboxyvinyl)-alpha-D-glucosamine + phosphate. The protein operates within cell wall biogenesis; peptidoglycan biosynthesis. Cell wall formation. Adds enolpyruvyl to UDP-N-acetylglucosamine. The sequence is that of UDP-N-acetylglucosamine 1-carboxyvinyltransferase 1 from Symbiobacterium thermophilum (strain DSM 24528 / JCM 14929 / IAM 14863 / T).